Consider the following 81-residue polypeptide: Large ribosomal subunit protein bL31 (81 aa).

Belongs to the bacterial ribosomal protein bL31 family. Type A subfamily. As to quaternary structure, part of the 50S ribosomal subunit.

Functionally, binds the 23S rRNA. The polypeptide is Large ribosomal subunit protein bL31 (Synechocystis sp. (strain ATCC 27184 / PCC 6803 / Kazusa)).